A 344-amino-acid polypeptide reads, in one-letter code: MLYPLLRPLLFKFDAETAHEHTLKMLDRAHRLHLTPLAASPAARQPVQAMGLTFPNPVGLAAGLDKNGAHIDALAALGFGFIEIGTVTPRPQDGNPKPRLFRLPEHEAIINRMGFNNHGVAALLDNVRRSKFKGVLGINIGKNAITPIENAVDDYLACLDQVYAAASYVTVNISSPNTKNLRQLQQGDELGRLLAALKQRQLALADQHGRYVPLAVKIAPDLDDEQIAEIARLLTGNGIDGVIATNTTLSRREVAGHPLESEAGGLSGAPVRARSTEVIRKLHKELGGAMPIIGVGGILSGNDAVEKLDAGASLVQLYSGLIYRGPELVGECARATAQYLQARN.

FMN contacts are provided by residues 62–66 (AGLDK) and T86. Residue K66 coordinates substrate. 111 to 115 (NRMGF) contacts substrate. N139 and N172 together coordinate FMN. A substrate-binding site is contributed by N172. S175 functions as the Nucleophile in the catalytic mechanism. N177 is a substrate binding site. FMN-binding residues include K217 and T245. Residue 246-247 (NT) coordinates substrate. FMN is bound by residues G268, G297, and 318-319 (YS).

Belongs to the dihydroorotate dehydrogenase family. Type 2 subfamily. In terms of assembly, monomer. Requires FMN as cofactor.

The protein localises to the cell membrane. The catalysed reaction is (S)-dihydroorotate + a quinone = orotate + a quinol. It participates in pyrimidine metabolism; UMP biosynthesis via de novo pathway; orotate from (S)-dihydroorotate (quinone route): step 1/1. Its function is as follows. Catalyzes the conversion of dihydroorotate to orotate with quinone as electron acceptor. The sequence is that of Dihydroorotate dehydrogenase (quinone) from Chromobacterium violaceum (strain ATCC 12472 / DSM 30191 / JCM 1249 / CCUG 213 / NBRC 12614 / NCIMB 9131 / NCTC 9757 / MK).